Here is a 2110-residue protein sequence, read N- to C-terminus: Protein Ycf2 (2110 aa).

1336 to 1343 (GSIGTGRS) contributes to the ATP binding site. Residues 1852–1876 (EEEAELQDEEAELQDEGAGRKDEEA) are disordered. Acidic residues predominate over residues 1854–1866 (EAELQDEEAELQD).

Belongs to the Ycf2 family.

It localises to the plastid. It is found in the chloroplast stroma. Probable ATPase of unknown function. Its presence in a non-photosynthetic plant (Epifagus virginiana) and experiments in tobacco indicate that it has an essential function which is probably not related to photosynthesis. This Pelargonium hortorum (Common geranium) protein is Protein Ycf2 (ycf2-A).